The following is a 1304-amino-acid chain: DNA-directed RNA polymerase subunit beta' (1304 aa).

A disordered region spans residues 1-23 (MSEKGRFSAGLSRQAADGNKADA). Zn(2+)-binding residues include cysteine 241, cysteine 315, cysteine 322, and cysteine 325. Residues 1256-1268 (AAEPEPDEEEEEP) show a composition bias toward acidic residues. A disordered region spans residues 1256–1304 (AAEPEPDEEEEEPAVLPELPPRLILEDDQLIDDSTPAFDELEEDDDEEE). Low complexity predominate over residues 1269–1278 (AVLPELPPRL). Residues 1294-1304 (DELEEDDDEEE) are compositionally biased toward acidic residues.

Belongs to the RNA polymerase beta' chain family. RpoC2 subfamily. In terms of assembly, in cyanobacteria the RNAP catalytic core is composed of 2 alpha, 1 beta, 1 beta', 1 gamma and 1 omega subunit. When a sigma factor is associated with the core the holoenzyme is formed, which can initiate transcription. Zn(2+) is required as a cofactor.

The catalysed reaction is RNA(n) + a ribonucleoside 5'-triphosphate = RNA(n+1) + diphosphate. Its function is as follows. DNA-dependent RNA polymerase catalyzes the transcription of DNA into RNA using the four ribonucleoside triphosphates as substrates. The protein is DNA-directed RNA polymerase subunit beta' of Synechococcus sp. (strain JA-2-3B'a(2-13)) (Cyanobacteria bacterium Yellowstone B-Prime).